Here is a 1116-residue protein sequence, read N- to C-terminus: Minor outer capsid protein P2 (1116 aa).

The PPPDE domain maps to 929–1116; that stretch reads ENNAANFFER…IGSNCSKLCA (188 aa). Catalysis depends on residues histidine 953 and cysteine 1111.

It belongs to the phytoreovirus minor outer capsid protein P2 family. Interacts with host ent-kaurene oxidases OSKO1, OSKO2, OSKOL4 and OSKOL5; this interaction.

Its subcellular location is the virion. The protein localises to the host cytoplasm. Minor capsid protein present in the outer capsid, which is required for adsorption of the virus onto host insect cells (Potential). Could play a role in the host plant virus induced dwarfism. The polypeptide is Minor outer capsid protein P2 (Rice dwarf virus (isolate Fujian) (RDV)).